A 571-amino-acid chain; its full sequence is Urease subunit alpha (571 aa).

3 residues coordinate Ni(2+): histidine 138, histidine 140, and lysine 221. Lysine 221 carries the N6-carboxylysine modification. Histidine 223 is a binding site for substrate. Residues histidine 250 and histidine 276 each contribute to the Ni(2+) site. The Proton donor role is filled by histidine 324. Residue aspartate 364 coordinates Ni(2+).

Belongs to the metallo-dependent hydrolases superfamily. Urease alpha subunit family. In terms of assembly, heterotrimer of UreA (gamma), UreB (beta) and UreC (alpha) subunits. Three heterotrimers associate to form the active enzyme. Ni cation is required as a cofactor. Post-translationally, carboxylation allows a single lysine to coordinate two nickel ions.

The protein localises to the cytoplasm. The enzyme catalyses urea + 2 H2O + H(+) = hydrogencarbonate + 2 NH4(+). It participates in nitrogen metabolism; urea degradation; CO(2) and NH(3) from urea (urease route): step 1/1. This is Urease subunit alpha from Staphylococcus aureus (strain JH9).